We begin with the raw amino-acid sequence, 664 residues long: Macoilin (664 aa).

The next 4 helical transmembrane spans lie at 28-48 (TFLYLKFLVVWALVLLADFVL), 75-95 (AFSVFFVCVAFTSNIICLLFI), 120-140 (VCLPTVSLWILFVYIEAAIRF), and 154-174 (FAAHCIGYPVVTLGFGFKSYV). The segment covering 253-265 (REKGKEKDKDAKK) has biased composition (basic and acidic residues). The disordered stretch occupies residues 253 to 274 (REKGKEKDKDAKKHNLGINNNN). A Phosphoserine modification is found at serine 305. A compositionally biased stretch (polar residues) spans 320–348 (KNYKNASGVVNSSPRSHSATNGSIPSSSS). The tract at residues 320–375 (KNYKNASGVVNSSPRSHSATNGSIPSSSSKNEKKQKCTSKGPSAHKDLMENCIPNN) is disordered. N-linked (GlcNAc...) asparagine glycosylation occurs at asparagine 324. The residue at position 332 (serine 332) is a Phosphoserine. Asparagine 340 and asparagine 452 each carry an N-linked (GlcNAc...) asparagine glycan. The tract at residues 630-664 (TSPLSPVSPHYSSKFVETSPSGLDPNASVYQPLKK) is disordered. Serine 631 and serine 634 each carry phosphoserine. N-linked (GlcNAc...) asparagine glycosylation occurs at asparagine 655.

This sequence belongs to the macoilin family. In terms of tissue distribution, strong expression in whole nervous system up to 12.5 dpc. Highly expressed in all neuronal differentiation fields from 14.5 dpc to birth, with highest expression in the telencephalic cortical plate and mitral cells in the olfactory bulb, and lower expression in neuronal progenitor zones. Progressively decreased expression in fields of neuron precursor proliferation from 14.5 dpc and virtually undetectable there by 17.5 dpc. No significant expression detected outside the nervous system. After birth, significant expression remains in the cerebellum, olfactory bulb and hippocampus.

It is found in the rough endoplasmic reticulum membrane. The protein localises to the nucleus membrane. In terms of biological role, plays a role in the regulation of neuronal activity. The sequence is that of Macoilin (Maco1) from Mus musculus (Mouse).